The primary structure comprises 397 residues: CCA-adding enzyme (397 aa).

Gly-27 and Arg-30 together coordinate ATP. The CTP site is built by Gly-27 and Arg-30. 2 residues coordinate Mg(2+): Asp-40 and Asp-42. ATP is bound by residues Arg-111, Asp-154, Arg-157, Arg-160, and Arg-163. The CTP site is built by Arg-111, Asp-154, Arg-157, Arg-160, and Arg-163.

This sequence belongs to the tRNA nucleotidyltransferase/poly(A) polymerase family. Bacterial CCA-adding enzyme type 3 subfamily. Homodimer. The cofactor is Mg(2+).

The enzyme catalyses a tRNA precursor + 2 CTP + ATP = a tRNA with a 3' CCA end + 3 diphosphate. The catalysed reaction is a tRNA with a 3' CCA end + 2 CTP + ATP = a tRNA with a 3' CCACCA end + 3 diphosphate. Catalyzes the addition and repair of the essential 3'-terminal CCA sequence in tRNAs without using a nucleic acid template. Adds these three nucleotides in the order of C, C, and A to the tRNA nucleotide-73, using CTP and ATP as substrates and producing inorganic pyrophosphate. Has no poly(A) polymerase activity. In Bacillus subtilis (strain 168), this protein is CCA-adding enzyme.